The sequence spans 306 residues: Palmitoyl-protein thioesterase ABHD10, mitochondrial (306 aa).

Residues 1 to 52 (MAVARLAAVAAWVPCRSWGWAAVPFGPHRGLSVLLARIPQRAPRWLPACRQK) constitute a mitochondrion transit peptide. The region spanning 78–178 (IIFIPGYLSY…VVALIGVATA (101 aa)) is the AB hydrolase-1 domain. Residues S152, D249, and H279 each act as charge relay system in the active site.

The protein belongs to the AB hydrolase superfamily.

Its subcellular location is the mitochondrion. It catalyses the reaction S-hexadecanoyl-L-cysteinyl-[protein] + H2O = L-cysteinyl-[protein] + hexadecanoate + H(+). The catalysed reaction is mycophenolic acid O-acyl-beta-D-glucuronide + H2O = mycophenolate + D-glucuronate + H(+). Inhibited by palmostatin-B. In terms of biological role, acts as an acyl-protein thioesterase that hydrolyzes fatty acids from acylated residues in proteins. Regulates the mitochondrial S-depalmitoylation of the nucleophilic active site residue of peroxiredoxin-5/PRDX5, a key antioxidant protein, therefore modulating mitochondrial antioxidant ability. Also catalyzes the deglucuronidation of mycophenolic acid acyl-glucuronide, an active metabolite of the immunosuppressant drug mycophenolate. This Homo sapiens (Human) protein is Palmitoyl-protein thioesterase ABHD10, mitochondrial.